Reading from the N-terminus, the 93-residue chain is Acylphosphatase (93 aa).

Residues Lys-3–Tyr-93 form the Acylphosphatase-like domain. Residues Arg-18 and Asn-36 contribute to the active site.

This sequence belongs to the acylphosphatase family.

It catalyses the reaction an acyl phosphate + H2O = a carboxylate + phosphate + H(+). The polypeptide is Acylphosphatase (acyP) (Borrelia garinii subsp. bavariensis (strain ATCC BAA-2496 / DSM 23469 / PBi) (Borreliella bavariensis)).